Here is a 958-residue protein sequence, read N- to C-terminus: Glycine dehydrogenase (decarboxylating) 2 (958 aa).

Residue lysine 707 is modified to N6-(pyridoxal phosphate)lysine.

It belongs to the GcvP family. As to quaternary structure, the glycine cleavage system is composed of four proteins: P, T, L and H. It depends on pyridoxal 5'-phosphate as a cofactor.

It catalyses the reaction N(6)-[(R)-lipoyl]-L-lysyl-[glycine-cleavage complex H protein] + glycine + H(+) = N(6)-[(R)-S(8)-aminomethyldihydrolipoyl]-L-lysyl-[glycine-cleavage complex H protein] + CO2. The glycine cleavage system catalyzes the degradation of glycine. The P protein binds the alpha-amino group of glycine through its pyridoxal phosphate cofactor; CO(2) is released and the remaining methylamine moiety is then transferred to the lipoamide cofactor of the H protein. The sequence is that of Glycine dehydrogenase (decarboxylating) 2 (gcvP2) from Pseudomonas aeruginosa (strain ATCC 15692 / DSM 22644 / CIP 104116 / JCM 14847 / LMG 12228 / 1C / PRS 101 / PAO1).